The following is a 466-amino-acid chain: Sulfate adenylyltransferase subunit 1 (466 aa).

The 216-residue stretch at 22 to 237 (KELVRFLTCG…LNTIDVKTQE (216 aa)) folds into the tr-type G domain. A G1 region spans residues 31–38 (GSVDDGKS). 31–38 (GSVDDGKS) contributes to the GTP binding site. A G2 region spans residues 89-93 (GITID). A G3 region spans residues 110-113 (DTPG). Residues 110–114 (DTPGH) and 165–168 (NKMD) each bind GTP. The segment at 165-168 (NKMD) is G4. The interval 202–204 (SAL) is G5.

Belongs to the TRAFAC class translation factor GTPase superfamily. Classic translation factor GTPase family. CysN/NodQ subfamily. Heterodimer composed of CysD, the smaller subunit, and CysN.

It carries out the reaction sulfate + ATP + H(+) = adenosine 5'-phosphosulfate + diphosphate. It participates in sulfur metabolism; hydrogen sulfide biosynthesis; sulfite from sulfate: step 1/3. In terms of biological role, with CysD forms the ATP sulfurylase (ATPS) that catalyzes the adenylation of sulfate producing adenosine 5'-phosphosulfate (APS) and diphosphate, the first enzymatic step in sulfur assimilation pathway. APS synthesis involves the formation of a high-energy phosphoric-sulfuric acid anhydride bond driven by GTP hydrolysis by CysN coupled to ATP hydrolysis by CysD. This is Sulfate adenylyltransferase subunit 1 from Colwellia psychrerythraea (strain 34H / ATCC BAA-681) (Vibrio psychroerythus).